The chain runs to 318 residues: Putative 2-hydroxyacid dehydrogenase SSP0606 (318 aa).

NAD(+) contacts are provided by residues 156-157, 235-237, and Asp-261; these read EI and ASR. Arg-237 is a catalytic residue. Glu-266 is an active-site residue. His-284 (proton donor) is an active-site residue. An NAD(+)-binding site is contributed by 284 to 287; sequence HIGN.

The protein belongs to the D-isomer specific 2-hydroxyacid dehydrogenase family.

This Staphylococcus saprophyticus subsp. saprophyticus (strain ATCC 15305 / DSM 20229 / NCIMB 8711 / NCTC 7292 / S-41) protein is Putative 2-hydroxyacid dehydrogenase SSP0606.